The following is a 388-amino-acid chain: Na(+)/H(+) antiporter NhaA (388 aa).

The next 11 helical transmembrane spans lie at 14–34 (GGIILIIAAALAMLMANMGAT), 59–79 (MLLWINDALMAVFFLLIGLEV), 95–115 (AFPVIAAIGGMIVPALLYLAF), 125–145 (GWAIPAATDIAFALGVLALLG), 154–174 (IFLMALAIIDDLGAIVIIALF), 179–199 (LSIVSLGVAAFAIAVLALLNL), 219–239 (VLKSGVHATLAGVIVGFFIPL), 254–274 (VLHPWVAYLILPLFAFANAGV), 292–312 (IIAGLLIGKPLGISLFCWLAL), 328–348 (IMAVGILCGIGFTMSIFIASL), and 360–380 (WAKLGILIGSLLSAVVGYSWL).

It belongs to the NhaA Na(+)/H(+) (TC 2.A.33) antiporter family.

It is found in the cell inner membrane. It catalyses the reaction Na(+)(in) + 2 H(+)(out) = Na(+)(out) + 2 H(+)(in). Its function is as follows. Na(+)/H(+) antiporter that extrudes sodium in exchange for external protons. This Salmonella choleraesuis (strain SC-B67) protein is Na(+)/H(+) antiporter NhaA.